The primary structure comprises 517 residues: GTPase Obg (517 aa).

An Obg domain is found at 2-159 (ATFVDTVTLH…GDVVLELKVV (158 aa)). Residues 160–336 (ADVALVGYPS…LSFALAELVK (177 aa)) enclose the OBG-type G domain. GTP-binding positions include 166-173 (GYPSAGKS), 191-195 (FTTLH), 212-215 (DVPG), 288-291 (NKID), and 317-319 (STV). Positions 173 and 193 each coordinate Mg(2+). Positions 355 to 439 (PRAVDEKPFT…GDGVVFDWEP (85 aa)) constitute an OCT domain. The disordered stretch occupies residues 490-517 (EGEAGLWADEDGTGQDGTDEDATTDAKA). Over residues 497-517 (ADEDGTGQDGTDEDATTDAKA) the composition is skewed to acidic residues.

Belongs to the TRAFAC class OBG-HflX-like GTPase superfamily. OBG GTPase family. In terms of assembly, monomer. Mg(2+) is required as a cofactor.

The protein resides in the cytoplasm. Functionally, an essential GTPase which binds GTP, GDP and possibly (p)ppGpp with moderate affinity, with high nucleotide exchange rates and a fairly low GTP hydrolysis rate. Plays a role in control of the cell cycle, stress response, ribosome biogenesis and in those bacteria that undergo differentiation, in morphogenesis control. The protein is GTPase Obg of Clavibacter sepedonicus (Clavibacter michiganensis subsp. sepedonicus).